The following is a 116-amino-acid chain: Large ribosomal subunit protein uL18 (116 aa).

Belongs to the universal ribosomal protein uL18 family. Part of the 50S ribosomal subunit; part of the 5S rRNA/L5/L18/L25 subcomplex. Contacts the 5S and 23S rRNAs.

This is one of the proteins that bind and probably mediate the attachment of the 5S RNA into the large ribosomal subunit, where it forms part of the central protuberance. The polypeptide is Large ribosomal subunit protein uL18 (Acinetobacter baylyi (strain ATCC 33305 / BD413 / ADP1)).